We begin with the raw amino-acid sequence, 163 residues long: Ubiquitin-like protein 1-ribosomal protein eS31 fusion protein (163 aa).

The 70-residue stretch at 1–70 (MVFVKTLNRT…IYVNLELLGG (70 aa)) folds into the Ubiquitin-like domain. Residue Gly-70 forms a Glycyl lysine isopeptide (Gly-Lys) (interchain with K-? in acceptor proteins) linkage. The C4-type zinc finger occupies 115-138 (CQQPSCGGGVFMAQHANRHYCGRC).

The protein in the N-terminal section; belongs to the ubiquitin family. It in the C-terminal section; belongs to the eukaryotic ribosomal protein eS31 family.

In Caenorhabditis briggsae, this protein is Ubiquitin-like protein 1-ribosomal protein eS31 fusion protein (ubl-1).